A 92-amino-acid polypeptide reads, in one-letter code: Small ribosomal subunit protein uS19 (92 aa).

This sequence belongs to the universal ribosomal protein uS19 family.

Its function is as follows. Protein S19 forms a complex with S13 that binds strongly to the 16S ribosomal RNA. The sequence is that of Small ribosomal subunit protein uS19 (rpsS) from Rickettsia prowazekii (strain Madrid E).